The sequence spans 259 residues: UPF0246 protein PST_1170 (259 aa).

It belongs to the UPF0246 family.

The polypeptide is UPF0246 protein PST_1170 (Stutzerimonas stutzeri (strain A1501) (Pseudomonas stutzeri)).